The chain runs to 216 residues: Somatotropin (216 aa).

The signal sequence occupies residues 1–26 (MAADSQTPWLLTFSLLCLLWPQEAGA). His45 provides a ligand contact to Zn(2+). Cys78 and Cys189 are oxidised to a cystine. At Ser131 the chain carries Phosphoserine. Residue Glu198 participates in Zn(2+) binding. A disulfide bridge links Cys206 with Cys214.

It belongs to the somatotropin/prolactin family.

The protein resides in the secreted. In terms of biological role, plays an important role in growth control. Its major role in stimulating body growth is to stimulate the liver and other tissues to secrete IGF1. It stimulates both the differentiation and proliferation of myoblasts. It also stimulates amino acid uptake and protein synthesis in muscle and other tissues. This chain is Somatotropin (Gh1), found in Rattus norvegicus (Rat).